A 40-amino-acid chain; its full sequence is MFPADVILQCFGFSVGIALVGYVISLFLDWSEEEGDEDDA.

The signal sequence occupies residues 1–27 (MFPADVILQCFGFSVGIALVGYVISLF).

This is an uncharacterized protein from Archaeoglobus fulgidus (strain ATCC 49558 / DSM 4304 / JCM 9628 / NBRC 100126 / VC-16).